Consider the following 328-residue polypeptide: D-cysteine desulfhydrase (328 aa).

Lysine 51 is subject to N6-(pyridoxal phosphate)lysine.

This sequence belongs to the ACC deaminase/D-cysteine desulfhydrase family. Homodimer. The cofactor is pyridoxal 5'-phosphate.

It catalyses the reaction D-cysteine + H2O = hydrogen sulfide + pyruvate + NH4(+) + H(+). Catalyzes the alpha,beta-elimination reaction of D-cysteine and of several D-cysteine derivatives. It could be a defense mechanism against D-cysteine. This is D-cysteine desulfhydrase from Shigella sonnei (strain Ss046).